A 57-amino-acid polypeptide reads, in one-letter code: uncharacterized protein (57 aa).

The segment at 34–57 is disordered; it reads QGKRGETEGQIEISRKAGHPAPAF.

This is an uncharacterized protein from Saccharomyces cerevisiae (strain ATCC 204508 / S288c) (Baker's yeast).